Here is a 586-residue protein sequence, read N- to C-terminus: NudC domain-containing protein 1 (586 aa).

The CS domain maps to 275–364 (KREPLYNWQQ…EPGCTWAELV (90 aa)).

The protein resides in the cytoplasm. It is found in the nucleus. The polypeptide is NudC domain-containing protein 1 (Xenopus laevis (African clawed frog)).